Consider the following 293-residue polypeptide: 33 kDa chaperonin (293 aa).

Intrachain disulfides connect Cys-238–Cys-240 and Cys-271–Cys-274.

It belongs to the HSP33 family. In terms of processing, under oxidizing conditions two disulfide bonds are formed involving the reactive cysteines. Under reducing conditions zinc is bound to the reactive cysteines and the protein is inactive.

It is found in the cytoplasm. Redox regulated molecular chaperone. Protects both thermally unfolding and oxidatively damaged proteins from irreversible aggregation. Plays an important role in the bacterial defense system toward oxidative stress. In Staphylococcus aureus (strain USA300), this protein is 33 kDa chaperonin.